Reading from the N-terminus, the 232-residue chain is ATP phosphoribosyltransferase (232 aa).

It belongs to the ATP phosphoribosyltransferase family. Short subfamily. As to quaternary structure, heteromultimer composed of HisG and HisZ subunits.

The protein resides in the cytoplasm. The catalysed reaction is 1-(5-phospho-beta-D-ribosyl)-ATP + diphosphate = 5-phospho-alpha-D-ribose 1-diphosphate + ATP. It functions in the pathway amino-acid biosynthesis; L-histidine biosynthesis; L-histidine from 5-phospho-alpha-D-ribose 1-diphosphate: step 1/9. Functionally, catalyzes the condensation of ATP and 5-phosphoribose 1-diphosphate to form N'-(5'-phosphoribosyl)-ATP (PR-ATP). Has a crucial role in the pathway because the rate of histidine biosynthesis seems to be controlled primarily by regulation of HisG enzymatic activity. This Mesorhizobium japonicum (strain LMG 29417 / CECT 9101 / MAFF 303099) (Mesorhizobium loti (strain MAFF 303099)) protein is ATP phosphoribosyltransferase (hisG).